A 227-amino-acid polypeptide reads, in one-letter code: Cytochrome c oxidase subunit 2 (227 aa).

The Mitochondrial intermembrane segment spans residues Met-1–Ser-14. The helical transmembrane segment at Pro-15–Thr-45 threads the bilayer. Residues Leu-46–Gln-59 lie on the Mitochondrial matrix side of the membrane. The helical transmembrane segment at Glu-60–Thr-87 threads the bilayer. At Asp-88–Leu-227 the chain is on the mitochondrial intermembrane side. Cu cation is bound by residues His-161, Cys-196, Glu-198, Cys-200, His-204, and Met-207. Glu-198 is a Mg(2+) binding site.

Belongs to the cytochrome c oxidase subunit 2 family. Component of the cytochrome c oxidase (complex IV, CIV), a multisubunit enzyme composed of 14 subunits. The complex is composed of a catalytic core of 3 subunits MT-CO1, MT-CO2 and MT-CO3, encoded in the mitochondrial DNA, and 11 supernumerary subunits COX4I, COX5A, COX5B, COX6A, COX6B, COX6C, COX7A, COX7B, COX7C, COX8 and NDUFA4, which are encoded in the nuclear genome. The complex exists as a monomer or a dimer and forms supercomplexes (SCs) in the inner mitochondrial membrane with NADH-ubiquinone oxidoreductase (complex I, CI) and ubiquinol-cytochrome c oxidoreductase (cytochrome b-c1 complex, complex III, CIII), resulting in different assemblies (supercomplex SCI(1)III(2)IV(1) and megacomplex MCI(2)III(2)IV(2)). Found in a complex with TMEM177, COA6, COX18, COX20, SCO1 and SCO2. Interacts with TMEM177 in a COX20-dependent manner. Interacts with COX20. Interacts with COX16. It depends on Cu cation as a cofactor.

Its subcellular location is the mitochondrion inner membrane. The enzyme catalyses 4 Fe(II)-[cytochrome c] + O2 + 8 H(+)(in) = 4 Fe(III)-[cytochrome c] + 2 H2O + 4 H(+)(out). In terms of biological role, component of the cytochrome c oxidase, the last enzyme in the mitochondrial electron transport chain which drives oxidative phosphorylation. The respiratory chain contains 3 multisubunit complexes succinate dehydrogenase (complex II, CII), ubiquinol-cytochrome c oxidoreductase (cytochrome b-c1 complex, complex III, CIII) and cytochrome c oxidase (complex IV, CIV), that cooperate to transfer electrons derived from NADH and succinate to molecular oxygen, creating an electrochemical gradient over the inner membrane that drives transmembrane transport and the ATP synthase. Cytochrome c oxidase is the component of the respiratory chain that catalyzes the reduction of oxygen to water. Electrons originating from reduced cytochrome c in the intermembrane space (IMS) are transferred via the dinuclear copper A center (CU(A)) of subunit 2 and heme A of subunit 1 to the active site in subunit 1, a binuclear center (BNC) formed by heme A3 and copper B (CU(B)). The BNC reduces molecular oxygen to 2 water molecules using 4 electrons from cytochrome c in the IMS and 4 protons from the mitochondrial matrix. This is Cytochrome c oxidase subunit 2 (MT-CO2) from Theropithecus gelada (Gelada baboon).